The chain runs to 297 residues: Glutamyl-Q tRNA(Asp) synthetase (297 aa).

L-glutamate contacts are provided by residues 7-11 (RFAPS) and glutamate 43. Positions 10 to 20 (PSPTGPLHFGS) match the 'HIGH' region motif. Zn(2+) contacts are provided by cysteine 99, cysteine 101, tyrosine 122, and cysteine 126. L-glutamate contacts are provided by tyrosine 182 and arginine 200. The short motif at 238 to 242 (KLSKQ) is the 'KMSKS' region element. Lysine 241 is a binding site for ATP.

The protein belongs to the class-I aminoacyl-tRNA synthetase family. GluQ subfamily. The cofactor is Zn(2+).

In terms of biological role, catalyzes the tRNA-independent activation of glutamate in presence of ATP and the subsequent transfer of glutamate onto a tRNA(Asp). Glutamate is transferred on the 2-amino-5-(4,5-dihydroxy-2-cyclopenten-1-yl) moiety of the queuosine in the wobble position of the QUC anticodon. This chain is Glutamyl-Q tRNA(Asp) synthetase, found in Burkholderia pseudomallei (strain K96243).